A 190-amino-acid polypeptide reads, in one-letter code: Adenine phosphoribosyltransferase (190 aa).

Belongs to the purine/pyrimidine phosphoribosyltransferase family. In terms of assembly, homodimer.

It localises to the cytoplasm. The catalysed reaction is AMP + diphosphate = 5-phospho-alpha-D-ribose 1-diphosphate + adenine. Its pathway is purine metabolism; AMP biosynthesis via salvage pathway; AMP from adenine: step 1/1. Its function is as follows. Catalyzes a salvage reaction resulting in the formation of AMP, that is energically less costly than de novo synthesis. This is Adenine phosphoribosyltransferase from Treponema denticola (strain ATCC 35405 / DSM 14222 / CIP 103919 / JCM 8153 / KCTC 15104).